The primary structure comprises 244 residues: Tegument protein UL51 (244 aa).

Cys9 carries the S-palmitoyl cysteine; by host lipid modification. The interval 175–244 (TAGLGATEAP…SSTEAPLLLA (70 aa)) is disordered. Residues 210–220 (RPGPVPPADPT) are compositionally biased toward pro residues.

Belongs to the herpesviridae UL51 family. In terms of assembly, oligomerizes. Interacts with UL7; this interaction mediates UL7 incorporation to virions. In terms of processing, phosphorylated. Post-translationally, palmitoylation is necessary for Golgi localization.

It is found in the virion tegument. It localises to the host cytoplasm. The protein resides in the host Golgi apparatus. Functionally, plays several roles during the time course of infection, including egress of virus particles from the perinuclear space and secondary envelopment of cytoplasmic capsids that bud into specific trans-Golgi network (TGN)-derived membranes. The polypeptide is Tegument protein UL51 (Human herpesvirus 2 (strain HG52) (HHV-2)).